Consider the following 312-residue polypeptide: Plasminogen activator (312 aa).

The N-terminal stretch at 1–20 (MKKSSIVATIITILSGSANA) is a signal peptide. Residues 21–31 (ASSQLIPNISP) are Periplasmic-facing. A beta stranded transmembrane segment spans residues 32 to 40 (DSFTVAAST). Over 41–70 (GMLSGKSHEMLYDAETGRKISQLDWKIKNV) the chain is Extracellular. A beta stranded membrane pass occupies residues 71–80 (AILKGDISWD). The Periplasmic portion of the chain corresponds to 81–84 (PYSF). A beta stranded transmembrane segment spans residues 85–94 (LTLNARGWTS). Topologically, residues 95–131 (LASGSGNMDDYDWMNENQSEWTDHSSHPATNVNHANE) are extracellular. Active-site residues include D104 and D106. Residues 132 to 140 (YDLNVKGWL) form a beta stranded membrane-spanning segment. At 141 to 145 (LQDEN) the chain is on the periplasmic side. The chain crosses the membrane as a beta stranded span at residues 146–154 (YKAGITAGY). At 155–194 (QETRFSWTATGGSYSYNNGAYTGNFPKGVRVIGYNQRFSM) the chain is on the extracellular side. A beta stranded membrane pass occupies residues 195-204 (PYIGLAGQYR). Topologically, residues 205–207 (IND) are periplasmic. Residues 208–216 (FELNALFKF) form a beta stranded membrane-spanning segment. The Extracellular segment spans residues 217–244 (SDWVRAHDNDEHYMRDLTFREKTSGSRY). Catalysis depends on residues D226 and H228. The chain crosses the membrane as a beta stranded span at residues 245-255 (YGTVINAGYYV). The Periplasmic segment spans residues 256–258 (TPN). The chain crosses the membrane as a beta stranded span at residues 259–267 (AKVFAEFTY). The Extracellular segment spans residues 268 to 301 (SKYDEGKGGTQTIDKNSGDSVSIGGDAAGISNKN). A beta stranded membrane pass occupies residues 302–312 (YTVTAGLQYRF).

It belongs to the peptidase A26 family.

It is found in the cell outer membrane. It catalyses the reaction Converts human Glu-plasminogen to plasmin by cleaving the 560-Arg-|-Val-561 peptide bond that is also hydrolyzed by the mammalian u-plasminogen activator and t-plasminogen activator. Also cleaves arginyl bonds in other proteins.. Requires bacterial lipopolysaccharide (LPS) for activation; addition of LPS to inactive protein reactivates it. In the absence of LPS the active site groove is slightly narrower, and peptide substrate binds deep within the active site groove, displacing the nucleophilic water molecule. In the mammalian host activates (cleaves) plasminogen to generate the serine protease plasmin. Plasmin degrades fibrin clots (fibrinolysis) and facilitates bacterial cell migration, enabling rapid dissemination of bacteria from the initial site of infection. Cleaves host plasminogen to generate plasmin and probably also has autocatalytic activity. Fibrinolytic activity prevails at 37 degrees Celsius whereas coagulase expression predominates at lower temperatures (28 degrees Celsius). Cleaves plasminogen; plasminogen cleavage is much higher than coagulase activity. The protein is Plasminogen activator of Yersinia pestis.